The following is a 503-amino-acid chain: Maturase K (503 aa).

This sequence belongs to the intron maturase 2 family. MatK subfamily.

It is found in the plastid. The protein localises to the chloroplast. Its function is as follows. Usually encoded in the trnK tRNA gene intron. Probably assists in splicing its own and other chloroplast group II introns. This is Maturase K from Thryptomene saxicola (Rock thryptomene).